Consider the following 103-residue polypeptide: Large ribosomal subunit protein eL42 (103 aa).

The Zn(2+) site is built by C18 and C21. The segment at 18 to 81 (CPKCRTHTEH…TVLKLKCSKC (64 aa)) adopts a C4-type zinc-finger fold. A disordered region spans residues 40-62 (LSEGERRYARKKKGYGSKRKPEQ). Basic residues predominate over residues 47–57 (YARKKKGYGSK). Residues C78 and C81 each coordinate Zn(2+).

This sequence belongs to the eukaryotic ribosomal protein eL42 family. Part of the 50S ribosomal subunit. Zn(2+) is required as a cofactor.

Binds to the 23S rRNA. The sequence is that of Large ribosomal subunit protein eL42 from Desulfurococcus amylolyticus (strain DSM 18924 / JCM 16383 / VKM B-2413 / 1221n) (Desulfurococcus kamchatkensis).